The primary structure comprises 191 residues: Photosystem I assembly protein Ycf4 (191 aa).

2 helical membrane-spanning segments follow: residues 34–54 (VASM…SSYF) and 68–88 (IFVP…LLAI).

This sequence belongs to the Ycf4 family.

Its subcellular location is the cellular thylakoid membrane. Functionally, seems to be required for the assembly of the photosystem I complex. This chain is Photosystem I assembly protein Ycf4, found in Prochlorococcus marinus (strain NATL1A).